Reading from the N-terminus, the 598-residue chain is mRNA-capping enzyme (598 aa).

Positions 1 to 215 (MSQTGAPPRW…GSASAPASEP (215 aa)) are TPase. One can recognise a Tyrosine-protein phosphatase domain in the interval 25–183 (LPMKTMLGPR…FRRYGDVEDA (159 aa)). The active-site Phosphocysteine intermediate is the cysteine 126. The interval 186 to 227 (APPLPEWCFDEDEEEDGEEDGSASAPASEPSSSHTGQSKKKK) is disordered. Residues 193-206 (CFDEDEEEDGEEDG) are compositionally biased toward acidic residues. The segment covering 207 to 218 (SASAPASEPSSS) has biased composition (low complexity). The GTase stretch occupies residues 233–598 (GAVFLEGVSV…PKRSANSIPQ (366 aa)). The active-site N6-GMP-lysine intermediate is lysine 298. GTP-binding positions include arginine 303, arginine 319, 347–349 (DGE), 462–464 (KWK), and 532–537 (RQRVDK). Positions 575 to 598 (RKNPADSDLMPPPPPKRSANSIPQ) are disordered.

In the N-terminal section; belongs to the non-receptor class of the protein-tyrosine phosphatase family. This sequence in the C-terminal section; belongs to the eukaryotic GTase family.

The protein localises to the nucleus. It carries out the reaction a 5'-end triphospho-ribonucleoside in mRNA + H2O = a 5'-end diphospho-ribonucleoside in mRNA + phosphate + H(+). It catalyses the reaction a 5'-end diphospho-ribonucleoside in mRNA + GTP + H(+) = a 5'-end (5'-triphosphoguanosine)-ribonucleoside in mRNA + diphosphate. Bifunctional mRNA-capping enzyme exhibiting RNA 5'-triphosphate monophosphatase activity in the N-terminal part and mRNA guanylyltransferase activity in the C-terminal part. Catalyzes the first two steps of cap formation: by removing the gamma-phosphate from the 5'-triphosphate end of nascent mRNA to yield a diphosphate end, and by transferring the GMP moiety of GTP to the 5'-diphosphate terminus of RNA via a covalent enzyme-GMP reaction intermediate. This is mRNA-capping enzyme (rngtt) from Danio rerio (Zebrafish).